Reading from the N-terminus, the 148-residue chain is 3-dehydroquinate dehydratase (148 aa).

Y23 functions as the Proton acceptor in the catalytic mechanism. Residues N75, H81, and D88 each coordinate substrate. H101 functions as the Proton donor in the catalytic mechanism. Substrate contacts are provided by residues 102–103 and R112; that span reads LS.

It belongs to the type-II 3-dehydroquinase family. In terms of assembly, homododecamer.

It catalyses the reaction 3-dehydroquinate = 3-dehydroshikimate + H2O. It participates in metabolic intermediate biosynthesis; chorismate biosynthesis; chorismate from D-erythrose 4-phosphate and phosphoenolpyruvate: step 3/7. Its function is as follows. Catalyzes a trans-dehydration via an enolate intermediate. This Xanthomonas oryzae pv. oryzae (strain MAFF 311018) protein is 3-dehydroquinate dehydratase.